The primary structure comprises 655 residues: THO complex subunit 1 (655 aa).

Disordered stretches follow at residues 403 to 427 (ERPA…LGKG) and 539 to 574 (PSEE…AVTN). A Nuclear localization signal motif is present at residues 415–431 (RKRQAPEDFLGKGPDRK). Basic and acidic residues predominate over residues 418–427 (QAPEDFLGKG). Positions 563–574 (DSPSIQSKAVTN) are enriched in polar residues. One can recognise a Death domain in the interval 573–655 (TNSQMDEIAA…NNIADNLSET (83 aa)).

As to quaternary structure, component of the THO complex. As to expression, expressed in the developing neuromast.

The protein resides in the nucleus. Its subcellular location is the nucleoplasm. The protein localises to the nucleus matrix. It is found in the cytoplasm. It localises to the cytosol. Functionally, component of the THO subcomplex of the TREX complex which is thought to couple mRNA transcription, processing and nuclear export, and which specifically associates with spliced mRNA and not with unspliced pre-mRNA. Required for efficient export of polyadenylated RNA. The THOC1-THOC2-THOC3 core complex alone is sufficient to bind export factor NXF1-NXT1 and promote ATPase activity of DDX39B. TREX is recruited to spliced mRNAs by a transcription-independent mechanism, binds to mRNA upstream of the exon-junction complex (EJC) and is recruited in a splicing- and cap-dependent manner to a region near the 5' end of the mRNA where it functions in mRNA export to the cytoplasm via the TAP/NXF1 pathway. Regulates transcriptional elongation of a subset of genes. Involved in genome stability by preventing co-transcriptional R-loop formation. May play a role in hair cell formation, hence may be involved in hearing. Participates in an apoptotic pathway which is characterized by activation of caspase-6, increases in the expression of BAK1 and BCL2L1 and activation of NF-kappa-B. This pathway does not require p53/TP53, nor does the presence of p53/TP53 affect the efficiency of cell killing. Activates a G2/M cell cycle checkpoint prior to the onset of apoptosis. Apoptosis is inhibited by association with RB1. Essential for early embryonic development. Required for normal gene expression during postnatal testis development. The sequence is that of THO complex subunit 1 (thoc1) from Danio rerio (Zebrafish).